Consider the following 114-residue polypeptide: Large ribosomal subunit protein uL18 (114 aa).

This sequence belongs to the universal ribosomal protein uL18 family. Part of the 50S ribosomal subunit; part of the 5S rRNA/L5/L18/L25 subcomplex. Contacts the 23S rRNA. Contacts protein L27 and the 5S rRNA.

Its function is as follows. This is one of the proteins that bind and probably mediate the attachment of the 5S RNA into the large ribosomal subunit, where it forms part of the central protuberance. This Deinococcus radiodurans (strain ATCC 13939 / DSM 20539 / JCM 16871 / CCUG 27074 / LMG 4051 / NBRC 15346 / NCIMB 9279 / VKM B-1422 / R1) protein is Large ribosomal subunit protein uL18 (rplR).